The sequence spans 238 residues: Ethylene-responsive transcription factor ERN3 (238 aa).

Residues 24–81 (KFVGVRQRASGKWAAEIKDTSKNIRMWLGTYKTAEEAARAYDEAAFLLRGTNTRTNFS) constitute a DNA-binding region (AP2/ERF).

The protein belongs to the AP2/ERF transcription factor family. ERF subfamily. In terms of tissue distribution, expressed in roots, root hairs and leaves.

It localises to the nucleus. Its function is as follows. Transcription factor involved in symbiotic nodule signaling in response to rhizobial Nod factors (NFs). Binds to the GCC box (NF-responsive box) of ENOD11 promoter. May act as transcriptional repressor of NF-responsive box-containing target gene promoters in root hairs. The chain is Ethylene-responsive transcription factor ERN3 from Medicago truncatula (Barrel medic).